A 263-amino-acid polypeptide reads, in one-letter code: Eukaryotic translation initiation factor 3 subunit J-B (263 aa).

Residues Met-1–Ala-13 show a composition bias toward low complexity. The segment at Met-1–Pro-115 is disordered. Ala-2 bears the N-acetylalanine mark. The segment at Ala-6–Val-74 is sufficient for interaction with EIF3B. 3 positions are modified to phosphoserine: Ser-16, Ser-18, and Ser-25. Acidic residues predominate over residues Glu-45–Glu-66. Basic and acidic residues predominate over residues Glu-67–Lys-111. Residues Lys-75–Thr-140 adopt a coiled-coil conformation. Lys-111 is covalently cross-linked (Glycyl lysine isopeptide (Lys-Gly) (interchain with G-Cter in SUMO2)). The residue at position 114 (Thr-114) is a Phosphothreonine. Residue Ser-132 is modified to Phosphoserine. A promotes stable association with the 40S ribosome region spans residues Tyr-248–Met-263. Tyr-259 bears the Phosphotyrosine mark.

It belongs to the eIF-3 subunit J family. Component of the eukaryotic translation initiation factor 3 (eIF-3) complex, which is composed of 13 subunits: EIF3A, EIF3B, EIF3C, EIF3D, EIF3E, EIF3F, EIF3G, EIF3H, EIF3I, EIF3J, EIF3K, EIF3L and EIF3M. The eIF-3 complex appears to include 3 stable modules: module A is composed of EIF3A, EIF3B, EIF3G and EIF3I; module B is composed of EIF3F, EIF3H, and EIF3M; and module C is composed of EIF3C, EIF3D, EIF3E, EIF3K and EIF3L. EIF3C of module C binds EIF3B of module A and EIF3H of module B, thereby linking the three modules. EIF3J is a labile subunit that binds to the eIF-3 complex via EIF3B. The eIF-3 complex interacts with RPS6KB1 under conditions of nutrient depletion. Mitogenic stimulation leads to binding and activation of a complex composed of MTOR and RPTOR, leading to phosphorylation and release of RPS6KB1 and binding of EIF4B to eIF-3. Post-translationally, phosphorylated. Phosphorylation is enhanced upon serum stimulation.

The protein localises to the cytoplasm. Its function is as follows. Component of the eukaryotic translation initiation factor 3 (eIF-3) complex, which is required for several steps in the initiation of protein synthesis. The eIF-3 complex associates with the 40S ribosome and facilitates the recruitment of eIF-1, eIF-1A, eIF-2:GTP:methionyl-tRNAi and eIF-5 to form the 43S pre-initiation complex (43S PIC). The eIF-3 complex stimulates mRNA recruitment to the 43S PIC and scanning of the mRNA for AUG recognition. The eIF-3 complex is also required for disassembly and recycling of post-termination ribosomal complexes and subsequently prevents premature joining of the 40S and 60S ribosomal subunits prior to initiation. The eIF-3 complex specifically targets and initiates translation of a subset of mRNAs involved in cell proliferation, including cell cycling, differentiation and apoptosis, and uses different modes of RNA stem-loop binding to exert either translational activation or repression. This subunit binds directly within the mRNA entry channel of the 40S ribosome to the aminoacyl (A) site. It may regulate the interaction between the 43S PIC and mRNA. This Mus musculus (Mouse) protein is Eukaryotic translation initiation factor 3 subunit J-B (Eif3j2).